The chain runs to 1000 residues: C2 domain-containing protein 5 (1000 aa).

The C2 domain occupies 1–109 (MPGKLKVKIV…EAATVISGWF (109 aa)). Positions 19, 26, 76, 78, 81, and 84 each coordinate Ca(2+). Residue Ser-197 is modified to Phosphoserine; by PKB/AKT2. Ser-200 and Ser-260 each carry phosphoserine. The segment at 265–330 (MKEIPFNEDP…SGSAGKEGGP (66 aa)) is disordered. The segment covering 274-289 (PNPNTHSSGPSTPLKN) has biased composition (polar residues). Positions 290–318 (QTYSFSPSKSYSRQSSSSDTDLSLTPKTG) are enriched in low complexity. Phosphoserine occurs at positions 293, 295, 304, 305, and 306. Thr-317 is modified (phosphothreonine). Residues 319 to 328 (MGSGSAGKEG) are compositionally biased toward gly residues. Ser-323 is modified (phosphoserine). At Thr-601 the chain carries Phosphothreonine. The disordered stretch occupies residues 639-669 (EIIGSPIPEPRQRSRLLRSQSESSDEVTELD). Phosphoserine occurs at positions 643, 657, 659, 661, and 662. Residue Thr-666 is modified to Phosphothreonine. Ser-671 is subject to Phosphoserine. Position 807 is a phosphothreonine (Thr-807). Phosphoserine occurs at positions 817 and 852.

Requires Ca(2+) as cofactor. Post-translationally, phosphorylated on Ser-197 by active myristoylated kinase AKT2; insulin-stimulated phosphorylation by AKT2 regulates SLC2A4/GLUT4 translocation into the plasma membrane.

The protein resides in the cytoplasmic vesicle membrane. Its subcellular location is the cytoplasm. It is found in the cell cortex. It localises to the cell membrane. The protein localises to the cell projection. The protein resides in the ruffle. Required for insulin-stimulated glucose transport and glucose transporter SLC2A4/GLUT4 translocation from intracellular glucose storage vesicle (GSV) to the plasma membrane (PM) in adipocytes. Binds phospholipid membranes in a calcium-dependent manner and is necessary for the optimal membrane fusion between SLC2A4/GLUT4 GSV and the PM. The polypeptide is C2 domain-containing protein 5 (C2CD5) (Homo sapiens (Human)).